The sequence spans 177 residues: Putative zinc finger protein 826 (177 aa).

The C2H2-type 1; degenerate zinc-finger motif lies at 99-114 (KTFTWSSSPHKHRRTH). The segment at 120 to 142 (YKCEECGKAFTASSTLSEYKTIH) adopts a C2H2-type 2; degenerate zinc-finger fold. Residues 148 to 170 (CKCEECGKAFNWSSDFNKHKRIH) form a C2H2-type 3 zinc finger.

Its subcellular location is the nucleus. Functionally, may be involved in transcriptional regulation. The polypeptide is Putative zinc finger protein 826 (ZNF826P) (Homo sapiens (Human)).